Reading from the N-terminus, the 792-residue chain is Phenylalanine--tRNA ligase beta subunit (792 aa).

In terms of domain architecture, tRNA-binding spans 39–147 (GESLGQVVVA…DDAPVGQALA (109 aa)). Residues 400-475 (PQPARILLRR…RIHGYDRVPT (76 aa)) enclose the B5 domain. Mg(2+) contacts are provided by Asp453, Asp459, Glu462, and Asp463. Residues 698–791 (SRFPSVRRDL…IEREHRARIR (94 aa)) form the FDX-ACB domain.

It belongs to the phenylalanyl-tRNA synthetase beta subunit family. Type 1 subfamily. As to quaternary structure, tetramer of two alpha and two beta subunits. Requires Mg(2+) as cofactor.

It localises to the cytoplasm. It carries out the reaction tRNA(Phe) + L-phenylalanine + ATP = L-phenylalanyl-tRNA(Phe) + AMP + diphosphate + H(+). This Xanthomonas oryzae pv. oryzae (strain MAFF 311018) protein is Phenylalanine--tRNA ligase beta subunit.